The chain runs to 64 residues: Large ribosomal subunit protein bL35 (64 aa).

Residues 1–26 (MPKMKTKSAAAKRFKTTKSGKIKRKQ) show a composition bias toward basic residues. Positions 1-46 (MPKMKTKSAAAKRFKTTKSGKIKRKQAYTSHLAPNKTTKQKRHLRK) are disordered.

This sequence belongs to the bacterial ribosomal protein bL35 family.

The chain is Large ribosomal subunit protein bL35 from Mycoplasmoides gallisepticum (strain R(low / passage 15 / clone 2)) (Mycoplasma gallisepticum).